Reading from the N-terminus, the 112-residue chain is SRA stem-loop-interacting RNA-binding protein, mitochondrial (112 aa).

At Ser-15 the chain carries Phosphoserine. Residues 19–98 form the RRM domain; the sequence is PIAFVRKIPW…IHVQAQRAKA (80 aa). Position 104 is a phosphothreonine (Thr-104). Phosphoserine is present on Ser-105.

The protein localises to the mitochondrion. The protein resides in the nucleus. Its function is as follows. RNA-binding protein that acts as a nuclear receptor corepressor. Probably acts by binding the SRA RNA, and repressing the SRA-mediated nuclear receptor coactivation. Binds the STR7 loop of SRA RNA. Also able to repress glucocorticoid (GR), androgen (AR), thyroid (TR) and VDR-mediated transactivation. The polypeptide is SRA stem-loop-interacting RNA-binding protein, mitochondrial (Slirp) (Mus musculus (Mouse)).